The following is a 150-amino-acid chain: Stage V sporulation protein AC (150 aa).

The next 4 helical transmembrane spans lie at 30 to 50 (LVGGLICAIGQGLQNFYIHFF), 57 to 77 (AGNPTAATLILISALLTGFGI), 84 to 104 (FAGAGSAVPVTGFANSMASAA), and 121 to 141 (FKLAGNVIVFGVVAAYIVGMI).

It is found in the cell membrane. This Bacillus subtilis (strain 168) protein is Stage V sporulation protein AC (spoVAC).